Consider the following 1078-residue polypeptide: Protein U90 (1078 aa).

Residues 1 to 12 (MESAKDTTSTSM) are compositionally biased toward polar residues. Disordered stretches follow at residues 1–28 (MESA…SNEE), 464–483 (SPTD…PTRQ), 703–732 (HMNN…DHKT), and 781–818 (ESED…DCTS).

The chain is Protein U90 (U90) from Homo sapiens (Human).